A 124-amino-acid polypeptide reads, in one-letter code: Orexigenic neuropeptide QRFP (124 aa).

The first 17 residues, 1-17 (MRCLCSWLCLLLPLSAC), serve as a signal peptide directing secretion. Positions 18–79 (FPLLDRRGPT…REHTGFRLGR (62 aa)) are excised as a propeptide. The disordered stretch occupies residues 63 to 100 (KEQQASRREHTGFRLGRQDSGSEATGFLPTDSEKASGP). Gln80 carries the pyrrolidone carboxylic acid modification. The residue at position 122 (Phe122) is a Phenylalanine amide.

Belongs to the RFamide neuropeptide family. As to quaternary structure, ligand for the G-protein coupled receptor QRFPR/GPR103. As to expression, expressed in the brain with highest expression levels in the hypothalamus and optic nerve. Also expressed in the trachea and mammary gland.

Its subcellular location is the secreted. Stimulates feeding and grooming behavior, metabolic rate and locomotor activity and increases blood pressure. May have orexigenic activity. May promote aldosterone secretion by the adrenal gland. This Rattus norvegicus (Rat) protein is Orexigenic neuropeptide QRFP (Qrfp).